Consider the following 102-residue polypeptide: Cuticle protein AM/CP1114 (102 aa).

The Chitin-binding type R&amp;R domain maps to 16 to 81; the sequence is DGNFHYSFET…VESPLLPSIP (66 aa). Positions 23–33 are enriched in polar residues; the sequence is FETSNGIQDTK. The disordered stretch occupies residues 23–50; sequence FETSNGIQDTKTGVPGSAGQSNMNGDFS.

In terms of tissue distribution, arthrodial membrane and calcified shell.

In Cancer pagurus (Rock crab), this protein is Cuticle protein AM/CP1114.